The chain runs to 210 residues: ATP-dependent dethiobiotin synthetase BioD (210 aa).

13–18 is a binding site for ATP; the sequence is DVGKTV. Thr17 lines the Mg(2+) pocket. Lys33 is a catalytic residue. Residues Arg47 and Glu101 each coordinate Mg(2+). ATP contacts are provided by residues 101-104 and 185-187; these read EGAG and PPL.

Belongs to the dethiobiotin synthetase family. As to quaternary structure, homodimer. Requires Mg(2+) as cofactor.

The protein localises to the cytoplasm. The enzyme catalyses (7R,8S)-7,8-diammoniononanoate + CO2 + ATP = (4R,5S)-dethiobiotin + ADP + phosphate + 3 H(+). Its pathway is cofactor biosynthesis; biotin biosynthesis; biotin from 7,8-diaminononanoate: step 1/2. Functionally, catalyzes a mechanistically unusual reaction, the ATP-dependent insertion of CO2 between the N7 and N8 nitrogen atoms of 7,8-diaminopelargonic acid (DAPA, also called 7,8-diammoniononanoate) to form a ureido ring. This chain is ATP-dependent dethiobiotin synthetase BioD, found in Afipia carboxidovorans (strain ATCC 49405 / DSM 1227 / KCTC 32145 / OM5) (Oligotropha carboxidovorans).